A 465-amino-acid chain; its full sequence is Cysteine--tRNA ligase (465 aa).

C27 serves as a coordination point for Zn(2+). Positions 29 to 39 match the 'HIGH' region motif; it reads PTVYNFFHIGN. Positions 207, 232, and 236 each coordinate Zn(2+). The 'KMSKS' region motif lies at 264-268; the sequence is KMSKS. An ATP-binding site is contributed by K267.

The protein belongs to the class-I aminoacyl-tRNA synthetase family. In terms of assembly, monomer. The cofactor is Zn(2+).

It localises to the cytoplasm. The catalysed reaction is tRNA(Cys) + L-cysteine + ATP = L-cysteinyl-tRNA(Cys) + AMP + diphosphate. In Clostridium botulinum (strain 657 / Type Ba4), this protein is Cysteine--tRNA ligase.